A 256-amino-acid chain; its full sequence is MFKSVAKLGKSPIFYLNSQRLIHIKTLTTPNENALKFLSTDGEMLQTRGSKSIVIKNTDENLINHSKLAQQIFLQCPGVESLMIGDDFLTINKDRMVHWNSIKPEIIDLLTKQLAYGEDVISKEFHAVQEEEGEGGYKINMPKFELTEEDEEVSELIEELIDTRIRPAILEDGGDIDYRGWDPKTGTVYLRLQGACTSCSSSEVTLKYGIESMLKHYVDEVKEVIQIMDPEQEIALKEFDKLEKKLESSKNTSHEK.

Positions 196–199 match the CxxC motif motif; it reads CTSC.

The protein belongs to the NifU family. In terms of assembly, homodimer; in absence of BOL3, probably bridged by an iron-sulfure cluster. Interacts with BOL3. Interacts with apo-target proteins, such as ACO1, LYS4, ACO2 and SDH2.

The protein localises to the mitochondrion matrix. Its function is as follows. Involved in iron homeostasis within the mitochondrion where it is involved in the assembly of iron-sulfur proteins. Together with BOL3, required during the last step of iron-sulfur protein assembly when the iron-sulfur cluster is inserted into the target protein. Required for protecting iron sulfur clusters from oxidative damage. This is NifU-like protein, mitochondrial (NFU1) from Saccharomyces cerevisiae (strain ATCC 204508 / S288c) (Baker's yeast).